The sequence spans 222 residues: Kinetochore protein Spc25 (222 aa).

Positions 51–100 (RHQRKVGKLQKVIMERREELDKRVSFIEELDRELEATKLRSLAMKDRIKQ) form a coiled coil.

Belongs to the SPC25 family. In terms of assembly, component of the Ndc80 complex, which is composed of Ndc80, Nuf2 and Spc25.

It localises to the nucleus. The protein resides in the chromosome. It is found in the centromere. The protein localises to the kinetochore. Acts as a component of the essential kinetochore-associated Ndc80 complex, which is required for chromosome segregation and spindle checkpoint activity during meiosis and mitosis. Required for kinetochore integrity and the organization of stable microtubule binding sites in the outer plate of the kinetochore. Participates in SAC signaling that responds specifically to disruptions in spindle microtubule dynamics. The NDC80 complex synergistically enhances the affinity of the SKA1 complex for microtubules and may allow the NDC80 complex to track depolymerizing microtubules. In Drosophila sechellia (Fruit fly), this protein is Kinetochore protein Spc25.